The sequence spans 217 residues: 3,4-dihydroxy-2-butanone 4-phosphate synthase (217 aa).

D-ribulose 5-phosphate-binding positions include 37–38, D42, 150–154, and E174; these read RE and RRGHT. Residue E38 participates in Mg(2+) binding. H153 lines the Mg(2+) pocket.

This sequence belongs to the DHBP synthase family. In terms of assembly, homodimer. Mg(2+) serves as cofactor. Requires Mn(2+) as cofactor.

It carries out the reaction D-ribulose 5-phosphate = (2S)-2-hydroxy-3-oxobutyl phosphate + formate + H(+). It participates in cofactor biosynthesis; riboflavin biosynthesis; 2-hydroxy-3-oxobutyl phosphate from D-ribulose 5-phosphate: step 1/1. In terms of biological role, catalyzes the conversion of D-ribulose 5-phosphate to formate and 3,4-dihydroxy-2-butanone 4-phosphate. This Syntrophotalea carbinolica (strain DSM 2380 / NBRC 103641 / GraBd1) (Pelobacter carbinolicus) protein is 3,4-dihydroxy-2-butanone 4-phosphate synthase.